The primary structure comprises 220 residues: B-cell antigen receptor complex-associated protein alpha chain (220 aa).

The N-terminal stretch at 1–28 is a signal peptide; that stretch reads MPGGLEALRALPLLLFLSYACLGPGCQA. Positions 29–117 constitute an Ig-like C2-type domain; sequence LRVEGGPPSL…ILKRSCGTYL (89 aa). Topologically, residues 29–137 are extracellular; it reads LRVEGGPPSL…LDMGEGTKNR (109 aa). A disulfide bridge links Cys-50 with Cys-101. N-linked (GlcNAc...) asparagine glycosylation is found at Asn-58 and Asn-68. Residues 138-159 form a helical membrane-spanning segment; the sequence is IITAEGIILLFCAVVPGTLLLF. The Cytoplasmic portion of the chain corresponds to 160-220; the sequence is RKRWQNEKFG…HIGDAQLEKP (61 aa). One can recognise an ITAM domain in the interval 171 to 199; it reads DMPDDYEDENLYEGLNLDDCSMYEDISRG. Phosphotyrosine; by SRC-type Tyr-kinases is present on residues Tyr-182 and Tyr-193. Residue Arg-198 is modified to Asymmetric dimethylarginine; by PRMT1. A Phosphotyrosine; by Tyr-kinases modification is found at Tyr-204.

In terms of assembly, heterodimer of alpha and beta chains; disulfide-linked. Part of the B-cell antigen receptor complex where the alpha/beta chain heterodimer is non-covalently associated with an antigen-specific membrane-bound surface immunoglobulin of two heavy chains and two light chains. Interacts through its phosphorylated ITAM domain with the SH2 domains of SYK which stimulates SYK autophosphorylation and activation. Also interacts, when phosphorylated on Tyr-204, with the SH2 domain of BLNK/SLP65, bringing BLNK into proximity with SYK and allowing SYK to phosphorylate BLNK which is necessary for trafficking of the BCR to late endosomes. Interacts with Src-family tyrosine kinases including FYN and LYN, increasing their activity. In terms of processing, phosphorylated on tyrosine, serine and threonine residues upon B-cell activation. Phosphorylation of tyrosine residues by Src-family kinases, including LYN, is an early and essential feature of the BCR signaling cascade. The phosphorylated tyrosines serve as docking sites for SH2-domain containing kinases, leading to their activation which in turn leads to phosphorylation of downstream targets. Phosphorylation of serine and threonine residues may prevent subsequent tyrosine phosphorylation. Post-translationally, arginine methylation in the ITAM domain may interfere with the binding of SYK. It promotes signals leading to B-cell differentiation. In terms of tissue distribution, B-cells.

It localises to the cell membrane. In terms of biological role, required in cooperation with CD79B for initiation of the signal transduction cascade activated by binding of antigen to the B-cell antigen receptor complex (BCR) which leads to internalization of the complex, trafficking to late endosomes and antigen presentation. Also required for BCR surface expression and for efficient differentiation of pro- and pre-B-cells. Stimulates SYK autophosphorylation and activation. Binds to BLNK, bringing BLNK into proximity with SYK and allowing SYK to phosphorylate BLNK. Also interacts with and increases activity of some Src-family tyrosine kinases. Represses BCR signaling during development of immature B-cells. This is B-cell antigen receptor complex-associated protein alpha chain (Cd79a) from Mus musculus (Mouse).